The chain runs to 399 residues: S-adenosylmethionine synthase (399 aa).

H16 contacts ATP. Mg(2+) is bound at residue D18. A K(+)-binding site is contributed by E44. Positions 57 and 100 each coordinate L-methionine. The interval 100–110 (QSSDIAQGVNE) is flexible loop. ATP contacts are provided by residues 177–179 (DAK), 244–245 (RF), D253, 259–260 (RK), A276, and K280. L-methionine is bound at residue D253. K284 serves as a coordination point for L-methionine.

The protein belongs to the AdoMet synthase family. In terms of assembly, homotetramer; dimer of dimers. It depends on Mg(2+) as a cofactor. K(+) is required as a cofactor.

It localises to the cytoplasm. The catalysed reaction is L-methionine + ATP + H2O = S-adenosyl-L-methionine + phosphate + diphosphate. It functions in the pathway amino-acid biosynthesis; S-adenosyl-L-methionine biosynthesis; S-adenosyl-L-methionine from L-methionine: step 1/1. Its function is as follows. Catalyzes the formation of S-adenosylmethionine (AdoMet) from methionine and ATP. The overall synthetic reaction is composed of two sequential steps, AdoMet formation and the subsequent tripolyphosphate hydrolysis which occurs prior to release of AdoMet from the enzyme. The protein is S-adenosylmethionine synthase of Lactococcus lactis subsp. lactis (strain IL1403) (Streptococcus lactis).